Here is a 166-residue protein sequence, read N- to C-terminus: Glycine cleavage system H protein 3, mitochondrial (166 aa).

Residues 1-35 (MALRMWASSTANALKLSSSASKSHLLPAFSISRCF) constitute a mitochondrion transit peptide. The region spanning 57-139 (VATIGITDHA…YEDGWMIKVK (83 aa)) is the Lipoyl-binding domain. Lysine 98 bears the N6-lipoyllysine mark. Residue serine 141 is modified to Phosphoserine.

The protein belongs to the GcvH family. The glycine cleavage system is composed of four proteins: P, T, L and H. (R)-lipoate serves as cofactor. S-nitrosylated and/or glutathionylated at unknown positions in response to nitric oxide.

It is found in the mitochondrion. Its activity is regulated as follows. Inhibited by harpin, S-nitrosoglutathione (GSNO), nitric oxide, N-ethylmaleimide and 5,5'-dithiobis-(2-nitrobenzoic acid). Functionally, the glycine decarboxylase (GDC) or glycine cleavage system catalyzes the degradation of glycine. The H protein shuttles the methylamine group of glycine from the P protein to the T protein. The polypeptide is Glycine cleavage system H protein 3, mitochondrial (GDH3) (Arabidopsis thaliana (Mouse-ear cress)).